A 156-amino-acid chain; its full sequence is ATP synthase subunit b (156 aa).

Residues 11–31 (AIAFVLFVLFCMKYVWPPIMA) traverse the membrane as a helical segment.

Belongs to the ATPase B chain family. As to quaternary structure, F-type ATPases have 2 components, F(1) - the catalytic core - and F(0) - the membrane proton channel. F(1) has five subunits: alpha(3), beta(3), gamma(1), delta(1), epsilon(1). F(0) has three main subunits: a(1), b(2) and c(10-14). The alpha and beta chains form an alternating ring which encloses part of the gamma chain. F(1) is attached to F(0) by a central stalk formed by the gamma and epsilon chains, while a peripheral stalk is formed by the delta and b chains.

It localises to the cell inner membrane. F(1)F(0) ATP synthase produces ATP from ADP in the presence of a proton or sodium gradient. F-type ATPases consist of two structural domains, F(1) containing the extramembraneous catalytic core and F(0) containing the membrane proton channel, linked together by a central stalk and a peripheral stalk. During catalysis, ATP synthesis in the catalytic domain of F(1) is coupled via a rotary mechanism of the central stalk subunits to proton translocation. Functionally, component of the F(0) channel, it forms part of the peripheral stalk, linking F(1) to F(0). This chain is ATP synthase subunit b, found in Proteus mirabilis (strain HI4320).